A 140-amino-acid chain; its full sequence is Putative pre-16S rRNA nuclease (140 aa).

It belongs to the YqgF nuclease family.

Its subcellular location is the cytoplasm. Functionally, could be a nuclease involved in processing of the 5'-end of pre-16S rRNA. The protein is Putative pre-16S rRNA nuclease of Yersinia enterocolitica serotype O:8 / biotype 1B (strain NCTC 13174 / 8081).